We begin with the raw amino-acid sequence, 600 residues long: MSHVLAAVAWPYANGPRHIGHVSGFGVPSDVFARYMRMTGHDVLMVSGTDEHGTPIQVQADAEGVTPRELADRYNRVIVADLHGLGLSYDLFTRTTTRNHYAVVQELFEGMYRNGYIVPKTTMGAISPSTGRTLPDRYIEGTCPICGYESARGDQCDSCGNQLDPIDLRNPKSKINGETPEFIETEHFFLDLPALAGVLRQWLDTREGWRPNVLRFSKNLLDDLQPRAITRDLEWGVPIPLEGWRDRGDKRIYVWFDAVIGYLSASIEWARRSGDPEAWRRWWSADGQGKDAPGYYFMGKDNIVFHSVIWPALLAGYSGEGSRDGQPGELGRMNLPTEVVSSEFLTMEGRKFSSSRRVVIYVRDFLERYDADALRYFIAVAGPESNDTDFTWAEFLRRNNDELVAGWGNLVNRSISMAAKNFGAIPPVDPAGLTEADEALLAVARAGFGAVGELIGRHRQKQAIGEAMKVVAEANRYLSEQAPWKLKSEADRPRMGTILHVALQVVSDANTLLTPFLPHSAQKIHELLGGTGVHAPMPVVEEVEDLDGGPAYPVLTGDYSVGARWESVPLEVGRPLDPPKPVFRKLDPSIVDEELARLAG.

A 'HIGH' region motif is present at residues 11-21 (PYANGPRHIGH). Zn(2+) is bound by residues cysteine 143, cysteine 146, cysteine 156, and cysteine 159. The 'KMSKS' region signature appears at 351–355 (KFSSS). Serine 354 provides a ligand contact to ATP.

Belongs to the class-I aminoacyl-tRNA synthetase family. MetG type 1 subfamily. Monomer. Requires Zn(2+) as cofactor.

The protein localises to the cytoplasm. The enzyme catalyses tRNA(Met) + L-methionine + ATP = L-methionyl-tRNA(Met) + AMP + diphosphate. Is required not only for elongation of protein synthesis but also for the initiation of all mRNA translation through initiator tRNA(fMet) aminoacylation. In Salinispora arenicola (strain CNS-205), this protein is Methionine--tRNA ligase.